Here is an 88-residue protein sequence, read N- to C-terminus: Small ribosomal subunit protein uS15 (88 aa).

The protein belongs to the universal ribosomal protein uS15 family. As to quaternary structure, part of the 30S ribosomal subunit. Forms a bridge to the 50S subunit in the 70S ribosome, contacting the 23S rRNA.

Functionally, one of the primary rRNA binding proteins, it binds directly to 16S rRNA where it helps nucleate assembly of the platform of the 30S subunit by binding and bridging several RNA helices of the 16S rRNA. In terms of biological role, forms an intersubunit bridge (bridge B4) with the 23S rRNA of the 50S subunit in the ribosome. This Polaromonas naphthalenivorans (strain CJ2) protein is Small ribosomal subunit protein uS15.